A 150-amino-acid chain; its full sequence is 3-hydroxyacyl-[acyl-carrier-protein] dehydratase FabZ (150 aa).

Histidine 51 is a catalytic residue.

The protein belongs to the thioester dehydratase family. FabZ subfamily.

Its subcellular location is the cytoplasm. The catalysed reaction is a (3R)-hydroxyacyl-[ACP] = a (2E)-enoyl-[ACP] + H2O. Functionally, involved in unsaturated fatty acids biosynthesis. Catalyzes the dehydration of short chain beta-hydroxyacyl-ACPs and long chain saturated and unsaturated beta-hydroxyacyl-ACPs. The polypeptide is 3-hydroxyacyl-[acyl-carrier-protein] dehydratase FabZ (Geobacter sulfurreducens (strain ATCC 51573 / DSM 12127 / PCA)).